The following is a 272-amino-acid chain: Shikimate dehydrogenase (NADP(+)) (272 aa).

Shikimate-binding positions include Ser14–Ser16 and Thr61. The active-site Proton acceptor is Lys65. Glu77 is a binding site for NADP(+). Positions 86 and 102 each coordinate shikimate. Residues Gly126 to Ala130, Asn149 to Arg154, and Met213 each bind NADP(+). A shikimate-binding site is contributed by Tyr215. An NADP(+)-binding site is contributed by Gly237.

It belongs to the shikimate dehydrogenase family. In terms of assembly, homodimer.

The catalysed reaction is shikimate + NADP(+) = 3-dehydroshikimate + NADPH + H(+). The protein operates within metabolic intermediate biosynthesis; chorismate biosynthesis; chorismate from D-erythrose 4-phosphate and phosphoenolpyruvate: step 4/7. Its function is as follows. Involved in the biosynthesis of the chorismate, which leads to the biosynthesis of aromatic amino acids. Catalyzes the reversible NADPH linked reduction of 3-dehydroshikimate (DHSA) to yield shikimate (SA). This Shigella dysenteriae serotype 1 (strain Sd197) protein is Shikimate dehydrogenase (NADP(+)).